The sequence spans 302 residues: GTP cyclohydrolase FolE2 (302 aa).

Positions 1–27 (MPKKQLPPKEERHKLFGSVPPKERTKP) are disordered.

This sequence belongs to the GTP cyclohydrolase IV family.

It catalyses the reaction GTP + H2O = 7,8-dihydroneopterin 3'-triphosphate + formate + H(+). It participates in cofactor biosynthesis; 7,8-dihydroneopterin triphosphate biosynthesis; 7,8-dihydroneopterin triphosphate from GTP: step 1/1. Functionally, converts GTP to 7,8-dihydroneopterin triphosphate. This is GTP cyclohydrolase FolE2 from Oceanobacillus iheyensis (strain DSM 14371 / CIP 107618 / JCM 11309 / KCTC 3954 / HTE831).